The primary structure comprises 84 residues: UPF0729 protein F18A11.3 (84 aa).

A helical membrane pass occupies residues 1–21 (MVCLPCIFLPIMMAIYMKFIM).

It belongs to the UPF0729 family.

It is found in the cell membrane. In Caenorhabditis elegans, this protein is UPF0729 protein F18A11.3.